An 840-amino-acid chain; its full sequence is Axin-2 (840 aa).

The interval 1-75 (MSSAVLVTLL…EGRASPDSPL (75 aa)) is disordered. A Tankyrase-binding motif motif is present at residues 21–30 (APRPPVPGEE). A compositionally biased stretch (polar residues) spans 42 to 55 (KVQSTKPMPVSSNA). Residues 56–69 (RRNEDGLGEPEGRA) are compositionally biased toward basic and acidic residues. The RGS domain occupies 81–200 (SLHSLLGDQD…LTSDIYLEYV (120 aa)). 5 disordered regions span residues 300–363 (SELS…KEMT), 398–435 (IREDEEKEGSEQALSSRDGAPVQHPLALLPSGSYEEDP), 447–485 (LKTPGCQSPGVGRYSPRSRSPDHHHQHHHHQQCHTLLPT), 572–614 (RGGT…GDRS), and 715–745 (ASQQRDRNHSAAGQAGASPFANPSLAPEDHK). Positions 303–318 (SSDALTDDSMSMTDSS) are enriched in low complexity. The tract at residues 327–413 (MGSKKQLQRE…KEGSEQALSS (87 aa)) is interaction with GSK3B. Positions 413–478 (SRDGAPVQHP…HHHQHHHHQQ (66 aa)) are interaction with beta-catenin. Residues 468 to 478 (DHHHQHHHHQQ) show a composition bias toward basic residues. The 83-residue stretch at 758–840 (ASELVVTYFF…RILGKVERID (83 aa)) folds into the DIX domain.

In terms of assembly, interacts with glycogen synthase kinase-3 beta (GSK3B) and beta-catenin. The interaction between axin and beta-catenin occurs via the armadillo repeats contained in beta-catenin. Interacts with SMAD7 and RNF111. Interacts with ANKRD6. Interacts with SIAH1. Interacts with SIAH2. ADP-ribosylated by tankyrase TNKS and TNKS2. Poly-ADP-ribosylated protein is recognized by RNF146, followed by ubiquitination and subsequent activation of the Wnt signaling pathway. Post-translationally, ubiquitinated by RNF146 when poly-ADP-ribosylated, leading to its degradation and subsequent activation of the Wnt signaling pathway. Deubiquitinated by USP34, deubiquitinated downstream of beta-catenin stabilization step: deubiquitination is important Wnt signaling to positively regulate beta-catenin (CTNBB1)-mediated transcription. In terms of processing, probably phosphorylated by GSK3B and dephosphorylated by PP2A. In terms of tissue distribution, expressed in Tcf7-positive innate-like T-cells (at protein level).

It is found in the cytoplasm. Its function is as follows. Inhibitor of the Wnt signaling pathway. Down-regulates beta-catenin. Probably facilitate the phosphorylation of beta-catenin and APC by GSK3B. This chain is Axin-2, found in Mus musculus (Mouse).